The primary structure comprises 727 residues: Centrosomal protein kizuna (727 aa).

The tract at residues 1-20 (MTERSGRGGGTRGASALPSP) is disordered. Residues 77-124 (KNARIRNQEYLKQFERIQANITASLEKLQELKIEFETQIKKMQLLSKD) adopt a coiled-coil conformation. 3 disordered regions span residues 176-226 (DFTT…NKSD), 271-456 (EGKK…FTNL), and 564-727 (RLAV…PRTP). The segment covering 198–223 (HQQTAQSSDVTGSRVVQTPGDTQCLN) has biased composition (polar residues). Basic and acidic residues predominate over residues 286-324 (LSPENRTTDLKCDSSRRSEGSEGEILTREHIEVEEERAR). A Phosphoserine modification is found at S328. Positions 343 to 359 (PQEKPPARKASSDHLPC) are enriched in basic and acidic residues. Residues 380 to 390 (LSSSSDLTVSV) are compositionally biased toward low complexity. Phosphothreonine; by PLK1 is present on T387. The segment covering 442 to 455 (APSTPDSPNESFTN) has biased composition (polar residues). A compositionally biased stretch (low complexity) spans 569–583 (SSKSSCSLPSTPSDE). Positions 603 to 613 (QEDESREESTE) are enriched in acidic residues. The segment covering 631–642 (LKQSALQGSTHQ) has biased composition (polar residues). Low complexity-rich tracts occupy residues 659 to 669 (GLKTGSGTFKT) and 677 to 689 (SEAS…GSPL). S711, S714, and S716 each carry phosphoserine.

Belongs to the kizuna family. As to quaternary structure, interacts with AKAP9, CEP72, ODF2, PCNT and TUBGCP2. Phosphorylation at Thr-387 by PLK1 is not needed for centrosomal localization or pericentriolar material expansion but is indispensable for spindle-pole stabilization.

Its subcellular location is the cytoplasm. The protein resides in the cytoskeleton. It is found in the microtubule organizing center. It localises to the centrosome. The protein localises to the cilium basal body. Centrosomal protein required for establishing a robust mitotic centrosome architecture that can endure the forces that converge on the centrosomes during spindle formation. Required for stabilizing the expanded pericentriolar material around the centriole. The sequence is that of Centrosomal protein kizuna (KIZ) from Bos taurus (Bovine).